A 793-amino-acid chain; its full sequence is Kinesin-associated protein 3 (793 aa).

Serine 60 carries the post-translational modification Phosphoserine. Residues 103–119 show a composition bias toward basic and acidic residues; the sequence is LPGKEKKEKSSKPKDPP. Positions 103-123 are disordered; that stretch reads LPGKEKKEKSSKPKDPPPFEG. ARM repeat units lie at residues 333–373, 374–412, 494–533, 578–620, and 621–662; these read FMEN…NLSF, DTGL…HISM, DGPT…NLTI, DDSC…QMVF, and HQAT…IIAE.

Interacts with SMC3 subunit of the cohesin complex. Heterotrimer of KIFAP3, KIF3A and KIF3B. Interacts with RAP1GDS1/SMG GDS. In terms of processing, phosphorylated on tyrosine residues by SRC in vitro; this reduces the binding affinity of the protein for RAP1GDS1.

Its function is as follows. Involved in tethering the chromosomes to the spindle pole and in chromosome movement. Binds to the tail domain of the KIF3A/KIF3B heterodimer to form a heterotrimeric KIF3 complex and may regulate the membrane binding of this complex. This chain is Kinesin-associated protein 3 (Kifap3), found in Mus musculus (Mouse).